We begin with the raw amino-acid sequence, 423 residues long: Protein CLP1 homolog (423 aa).

ATP-binding positions include glutamate 19, lysine 60, and 122 to 127 (DVGKTT).

It belongs to the Clp1 family. Clp1 subfamily.

Its subcellular location is the nucleus. Required for endonucleolytic cleavage during polyadenylation-dependent pre-mRNA 3'-end formation. This Culex quinquefasciatus (Southern house mosquito) protein is Protein CLP1 homolog (cbc).